We begin with the raw amino-acid sequence, 577 residues long: Acyl-coenzyme A synthetase ACSM2B, mitochondrial (577 aa).

The transit peptide at 1–46 directs the protein to the mitochondrion; it reads MHWLRKVQGLCTLWGTQMSSRTLYINSRQLVSLQWGHQEVPAKFNF. Gln-139 lines the CoA pocket. Residues 221 to 229, 359 to 364, Asp-446, and Arg-461 contribute to the ATP site; these read TSGTSGLPK and EFYGQT. Thr-364 is a substrate binding site. Residue 469 to 471 participates in CoA binding; it reads SGY. Substrate is bound at residue Arg-472. Arg-501 is a binding site for CoA. The residue at position 513 (Ser-513) is a Phosphoserine. CoA-binding positions include Lys-532 and 540 to 542; that span reads YPR. Lys-557 serves as a coordination point for ATP.

It belongs to the ATP-dependent AMP-binding enzyme family. Monomer. Mg(2+) serves as cofactor. Mn(2+) is required as a cofactor. In terms of tissue distribution, detected in liver.

The protein resides in the mitochondrion. It carries out the reaction a medium-chain fatty acid + ATP + CoA = a medium-chain fatty acyl-CoA + AMP + diphosphate. It catalyses the reaction benzoate + ATP + CoA = benzoyl-CoA + AMP + diphosphate. The enzyme catalyses hexanoate + ATP + CoA = hexanoyl-CoA + AMP + diphosphate. The catalysed reaction is butanoate + ATP + CoA = butanoyl-CoA + AMP + diphosphate. It carries out the reaction octanoate + ATP + CoA = octanoyl-CoA + AMP + diphosphate. It catalyses the reaction decanoate + ATP + CoA = decanoyl-CoA + AMP + diphosphate. Activated by monovalent cations, such as potassium, rubidium or ammonium. Its function is as follows. Catalyzes the activation of fatty acids by CoA to produce an acyl-CoA, the first step in fatty acid metabolism. Capable of activating medium-chain fatty acids (e.g. butyric (C4) to decanoic (C10) acids), and certain carboxylate-containing xenobiotics, e.g. benzoate. The chain is Acyl-coenzyme A synthetase ACSM2B, mitochondrial (ACSM2B) from Homo sapiens (Human).